We begin with the raw amino-acid sequence, 475 residues long: Trifunctional enzyme subunit beta, mitochondrial (475 aa).

The N-terminal 34 residues, 1 to 34 (MTTILTSTFRNLSTTSKWALRFSVRPLSCSSQVQ), are a transit peptide targeting the mitochondrion. Lys-53 carries the N6-succinyllysine modification. Position 73 is an N6-acetyllysine; alternate (Lys-73). At Lys-73 the chain carries N6-succinyllysine; alternate. The active-site Acyl-thioester intermediate is the Cys-139. The stretch at 174–221 (IRHSRNMRKMMLDLNKAKTLAQRLSLLTKFRLNFLSPELPAVAEFSTN) is an intramembrane region. N6-acetyllysine; alternate is present on Lys-189. Lys-189 carries the N6-succinyllysine; alternate modification. Lys-191, Lys-273, and Lys-292 each carry N6-succinyllysine. Lys-294 is modified (N6-acetyllysine; alternate). At Lys-294 the chain carries N6-succinyllysine; alternate. Lys-299 carries the post-translational modification N6-acetyllysine. Position 333 is an N6-acetyllysine; alternate (Lys-333). At Lys-333 the chain carries N6-succinyllysine; alternate. Residues Lys-349 and Lys-362 each carry the N6-acetyllysine modification. Catalysis depends on Cys-459, which acts as the Proton donor/acceptor.

The protein belongs to the thiolase-like superfamily. Thiolase family. In terms of assembly, heterotetramer of 2 alpha/HADHA and 2 beta/HADHB subunits; forms the mitochondrial trifunctional enzyme. Also purified as higher order heterooligomers including a 4 alpha/HADHA and 4 beta/HADHB heterooligomer which physiological significance remains unclear. The mitochondrial trifunctional enzyme interacts with MTLN. Interacts with RSAD2/viperin.

Its subcellular location is the mitochondrion. The protein resides in the mitochondrion inner membrane. The protein localises to the mitochondrion outer membrane. It localises to the endoplasmic reticulum. The enzyme catalyses an acyl-CoA + acetyl-CoA = a 3-oxoacyl-CoA + CoA. The catalysed reaction is butanoyl-CoA + acetyl-CoA = 3-oxohexanoyl-CoA + CoA. It carries out the reaction hexanoyl-CoA + acetyl-CoA = 3-oxooctanoyl-CoA + CoA. It catalyses the reaction octanoyl-CoA + acetyl-CoA = 3-oxodecanoyl-CoA + CoA. The enzyme catalyses decanoyl-CoA + acetyl-CoA = 3-oxododecanoyl-CoA + CoA. The catalysed reaction is dodecanoyl-CoA + acetyl-CoA = 3-oxotetradecanoyl-CoA + CoA. It carries out the reaction tetradecanoyl-CoA + acetyl-CoA = 3-oxohexadecanoyl-CoA + CoA. It participates in lipid metabolism; fatty acid beta-oxidation. Mitochondrial trifunctional enzyme catalyzes the last three of the four reactions of the mitochondrial beta-oxidation pathway. The mitochondrial beta-oxidation pathway is the major energy-producing process in tissues and is performed through four consecutive reactions breaking down fatty acids into acetyl-CoA. Among the enzymes involved in this pathway, the trifunctional enzyme exhibits specificity for long-chain fatty acids. Mitochondrial trifunctional enzyme is a heterotetrameric complex composed of two proteins, the trifunctional enzyme subunit alpha/HADHA carries the 2,3-enoyl-CoA hydratase and the 3-hydroxyacyl-CoA dehydrogenase activities, while the trifunctional enzyme subunit beta/HADHB described here bears the 3-ketoacyl-CoA thiolase activity. The chain is Trifunctional enzyme subunit beta, mitochondrial (Hadhb) from Rattus norvegicus (Rat).